Consider the following 197-residue polypeptide: Probable 26S proteasome non-ATPase regulatory subunit 9 (197 aa).

A PDZ domain is found at 75 to 166; that stretch reads KIVVEMENEN…KIIRVTVIRE (92 aa).

Belongs to the proteasome subunit p27 family.

Functionally, acts as a chaperone during the assembly of the 26S proteasome, specifically of the base subcomplex of the 19S regulatory complex (RC). This is Probable 26S proteasome non-ATPase regulatory subunit 9 (psmd-9) from Caenorhabditis elegans.